Consider the following 332-residue polypeptide: NADH-quinone oxidoreductase subunit H (332 aa).

9 helical membrane passes run 4-24, 44-64, 78-98, 120-140, 165-185, 194-214, 255-275, 279-299, and 312-332; these read FAFF…IFAS, IGPD…MIKL, FIFA…LAAI, VALL…FLGG, VGAL…LVDI, FSWL…ALFI, IAGA…FWII, IMMI…RAAF, and YLIL…TVLL.

It belongs to the complex I subunit 1 family. NDH-1 is composed of 14 different subunits. Subunits NuoA, H, J, K, L, M, N constitute the membrane sector of the complex.

It localises to the cell inner membrane. The enzyme catalyses a quinone + NADH + 5 H(+)(in) = a quinol + NAD(+) + 4 H(+)(out). Functionally, NDH-1 shuttles electrons from NADH, via FMN and iron-sulfur (Fe-S) centers, to quinones in the respiratory chain. The immediate electron acceptor for the enzyme in this species is believed to be ubiquinone. Couples the redox reaction to proton translocation (for every two electrons transferred, four hydrogen ions are translocated across the cytoplasmic membrane), and thus conserves the redox energy in a proton gradient. This subunit may bind ubiquinone. In Campylobacter jejuni subsp. jejuni serotype O:23/36 (strain 81-176), this protein is NADH-quinone oxidoreductase subunit H.